The chain runs to 126 residues: Holo-[acyl-carrier-protein] synthase (126 aa).

Mg(2+) is bound by residues Asp9 and Glu58.

The protein belongs to the P-Pant transferase superfamily. AcpS family. Mg(2+) is required as a cofactor.

The protein localises to the cytoplasm. The catalysed reaction is apo-[ACP] + CoA = holo-[ACP] + adenosine 3',5'-bisphosphate + H(+). Functionally, transfers the 4'-phosphopantetheine moiety from coenzyme A to a Ser of acyl-carrier-protein. This chain is Holo-[acyl-carrier-protein] synthase, found in Klebsiella pneumoniae subsp. pneumoniae (strain ATCC 700721 / MGH 78578).